The primary structure comprises 284 residues: Sulfotransferase 2A6 (284 aa).

Residue 43–48 (KSGTNW) participates in 3'-phosphoadenylyl sulfate binding. The active-site Proton acceptor is the histidine 98. 3'-phosphoadenylyl sulfate is bound by residues arginine 120, serine 128, tyrosine 183, 217–222 (SSFQVM), and 246–248 (RNG).

This sequence belongs to the sulfotransferase 1 family. As to quaternary structure, oligomer. As to expression, liver, exhibiting a sex-dependent spatial localization in the lobule of the liver.

Its subcellular location is the cytoplasm. The protein localises to the cytosol. The enzyme catalyses an alcohol + 3'-phosphoadenylyl sulfate = an alkyl sulfate + adenosine 3',5'-bisphosphate + H(+). It catalyses the reaction glycolithocholate + 3'-phosphoadenylyl sulfate = sulfoglycolithocholate + adenosine 3',5'-bisphosphate + H(+). The catalysed reaction is taurolithocholate + 3'-phosphoadenylyl sulfate = taurolithocholate 3-sulfate + adenosine 3',5'-bisphosphate + H(+). It carries out the reaction 3beta-hydroxyandrost-5-en-17-one + 3'-phosphoadenylyl sulfate = dehydroepiandrosterone 3-sulfate + adenosine 3',5'-bisphosphate + H(+). The enzyme catalyses 3beta-hydroxy-5-cholenate + 3'-phosphoadenylyl sulfate = 3beta-sulfo-5-cholenate + adenosine 3',5'-bisphosphate + H(+). It catalyses the reaction deoxycholate + 3'-phosphoadenylyl sulfate = 3alpha-sulfodeoxycholate + adenosine 3',5'-bisphosphate + H(+). The catalysed reaction is glycodeoxycholate + 3'-phosphoadenylyl sulfate = 3alpha-sulfoglycodeoxycholate + adenosine 3',5'-bisphosphate + H(+). It carries out the reaction taurodeoxycholate + 3'-phosphoadenylyl sulfate = 3alpha-sulfotaurodeoxycholate + adenosine 3',5'-bisphosphate + H(+). Its function is as follows. Sulfotransferase that utilizes 3'-phospho-5'-adenylyl sulfate (PAPS) as sulfonate donor to catalyze the sulfonation of the hydroxyl group of hydroxysteroids and bile acids. Prefered substrates are dehydroepiandrosterone (DHEA, also known as 3beta-hydroxyandrost-5-en-17-one) and 3beta-hydroxy-5-cholenoate, but can also catalyze deoxycholate and its conjugates, and lithocholate conjugates, in vitro. This Rattus norvegicus (Rat) protein is Sulfotransferase 2A6.